The sequence spans 239 residues: Lactate utilization protein A 1 (239 aa).

Belongs to the LutA/YkgE family.

Functionally, is involved in L-lactate degradation and allows cells to grow with lactate as the sole carbon source. This chain is Lactate utilization protein A 1, found in Bacillus cereus (strain AH820).